The chain runs to 193 residues: Cysteine and glycine-rich protein 1 (193 aa).

In terms of domain architecture, LIM zinc-binding 1 spans Cys-10–Cys-61. Positions Lys-64–Lys-69 match the Nuclear localization signal motif. Position 81 is a phosphoserine (Ser-81). N6-acetyllysine is present on residues Lys-84, Lys-112, Lys-131, Lys-137, and Lys-161. Residues Cys-119–Cys-170 form the LIM zinc-binding 2 domain. Ser-192 is subject to Phosphoserine.

In terms of assembly, interacts with ASCC1; ASCC2 and TRIP4.

It is found in the nucleus. In terms of biological role, could play a role in neuronal development. This chain is Cysteine and glycine-rich protein 1 (CSRP1), found in Bos taurus (Bovine).